The sequence spans 111 residues: Ribulose bisphosphate carboxylase small subunit (111 aa).

This sequence belongs to the RuBisCO small chain family. In terms of assembly, heterohexadecamer of 8 large and 8 small subunits. The CcmM short form purifies from carboxysomes in complex with both RuBisCO subunits; a second complex with full-length CcmM and RuBisCO also includes carbonic anhydrase (CA, ccaA). RuBisCO-CcmM complexes are probably associated with the carboxysome shell. Isolated reduced and oxidized SSUL1 binds holo-RuBisCO (RbcL(8)-RbcS(8)) but not either subunit octamer alone; RuBisCO has a higher affinity for reduced SSUL1.

Its subcellular location is the carboxysome. Functionally, ruBisCO catalyzes two reactions: the carboxylation of D-ribulose 1,5-bisphosphate, the primary event in carbon dioxide fixation, as well as the oxidative fragmentation of the pentose substrate in the photorespiration process. Both reactions occur simultaneously and in competition at the same active site. Beta-carboxysome assembly initiates when soluble RuBisCO aggregates is condensed into a liquid matrix in a pre-carboxysome by the RbcS-like domains of probably both CcmM58 and CcmM35. CcmN interacts with the N-terminus of CcmM58, and then recruits the CcmK2 major shell protein via CcmN's encapsulation peptide. Shell formation requires CcmK proteins and CcmO. CcmL caps the otherwise elongated carboxysome. Once fully encapsulated carboxysomes are formed, they migrate within the cell probably via interactions with the cytoskeleton. The chain is Ribulose bisphosphate carboxylase small subunit from Synechococcus elongatus (strain ATCC 33912 / PCC 7942 / FACHB-805) (Anacystis nidulans R2).